Here is a 351-residue protein sequence, read N- to C-terminus: UDP-3-O-acylglucosamine N-acyltransferase (351 aa).

H240 functions as the Proton acceptor in the catalytic mechanism.

This sequence belongs to the transferase hexapeptide repeat family. LpxD subfamily. Homotrimer.

The enzyme catalyses a UDP-3-O-[(3R)-3-hydroxyacyl]-alpha-D-glucosamine + a (3R)-hydroxyacyl-[ACP] = a UDP-2-N,3-O-bis[(3R)-3-hydroxyacyl]-alpha-D-glucosamine + holo-[ACP] + H(+). It functions in the pathway bacterial outer membrane biogenesis; LPS lipid A biosynthesis. Its function is as follows. Catalyzes the N-acylation of UDP-3-O-acylglucosamine using 3-hydroxyacyl-ACP as the acyl donor. Is involved in the biosynthesis of lipid A, a phosphorylated glycolipid that anchors the lipopolysaccharide to the outer membrane of the cell. The polypeptide is UDP-3-O-acylglucosamine N-acyltransferase (Pseudomonas entomophila (strain L48)).